Consider the following 462-residue polypeptide: Chromosomal replication initiator protein DnaA (462 aa).

The domain I, interacts with DnaA modulators stretch occupies residues Met-1 to Asn-86. The domain II stretch occupies residues Asn-86 to Ser-125. A domain III, AAA+ region region spans residues Asn-126 to Ala-342. ATP contacts are provided by Gly-170, Gly-172, Lys-173, and Thr-174. The segment at Asn-343–Ser-462 is domain IV, binds dsDNA.

Belongs to the DnaA family. As to quaternary structure, oligomerizes as a right-handed, spiral filament on DNA at oriC.

It is found in the cytoplasm. Functionally, plays an essential role in the initiation and regulation of chromosomal replication. ATP-DnaA binds to the origin of replication (oriC) to initiate formation of the DNA replication initiation complex once per cell cycle. Binds the DnaA box (a 9 base pair repeat at the origin) and separates the double-stranded (ds)DNA. Forms a right-handed helical filament on oriC DNA; dsDNA binds to the exterior of the filament while single-stranded (ss)DNA is stabiized in the filament's interior. The ATP-DnaA-oriC complex binds and stabilizes one strand of the AT-rich DNA unwinding element (DUE), permitting loading of DNA polymerase. After initiation quickly degrades to an ADP-DnaA complex that is not apt for DNA replication. Binds acidic phospholipids. The sequence is that of Chromosomal replication initiator protein DnaA from Photorhabdus laumondii subsp. laumondii (strain DSM 15139 / CIP 105565 / TT01) (Photorhabdus luminescens subsp. laumondii).